Here is a 1246-residue protein sequence, read N- to C-terminus: MGHSRRPVGGEKKSRGFGRSKAVADVGDGRQTGGKPQVKKATFESTKKKEIGVSDLTLLSKISNEAINDNLKLRFQHDEIYTYIGHVLVSVNPFRDLGIYTDKVLESYRGKNRLEVPPHVFAVAESAYYNMKSYNDNQCVIISGESGAGKTEAAKRIMQYIASVSGGSDSSIQHTKDMVLATNPLLESFGNAKTLRNNNSSRFGKYLELEFNSRGEPVGANITNYLLEKSRVVGQITNERNFHIFYQFTKAAPQKYRDMFGIQQPQSYLYTSRSKCYDVPGVDDAAEFRDTLNAMGVIGMSEPEQDQVFRMLSAILWIGNIQFVEDDSGNAAIPDQSTVNYVAYLLEVDPGQVNKALTIRIMETARGGRRGSVYEVPLNTVQALAVRDALAKAIYFNLFDWIVERVNQSLTARGTVANSIGILDIYGFEIFEKNSFEQLCINYVNEKLQQIFIQLTLKAEQDEYAREQIQWTPIKYFDNKVVCSLIEDKRPPGVFAALNDACATAHADSGAADNTFVGRLNFLSQNPNFENRQGQFIVKHYAGDVSYAVEGMTDKNKDQLLKDLLNLVGSSSNEFVHTLFPNQVNQDDKRRPPTASDKIKASANDLVATLMKAQPSYIRTIKPNDNKAPKEYNEGNVLHQIKYLGLQENVRIRRAGFAYRQTFDKFVERFYLLSPKTSYAGDYTWTGDAESGARQILKDTSIPQEEFQMGITKVFVKTPETLFALEAMRDRYWHNMAIRIQRAWRNYLRYRIECAIRIQRFWRRMTGGLELIKVRDQGHKVLQGRKERRRMSLLGSRRFLGDYLGIANKGGPGEMIRNGAGIGSDTVLFSCRGEVLVSKFGRSSKPSPRIFVLTNRHFIIVAQNLVNGQLVISAERTIPIGAIKSVSTSNLKDDWFSFVIGAQEPDPLMNCVFKTELFTHLSNALHGQLNIKIADHIEYNKKPGKLATVKVVKEPGSSNVDTYKSSTIHTSAGEPPSSVSKPTPRGKQVAARPVTKGKLLRPGGPGGGPSKLAARPMPARQPVPQPAASQAPAPQPAAVPRPVPQPVAAVAASHTRTASSGSMRAPPPPPPVSPPAPKKPMAKVLYDFSSAQSNELSIKAGELVEIVSKEGNGWWLCMNTTTSVQGWTPQAYLEEQKAAPPPPPPAAPRSTPATNGTATAAAAKAKPAPPAPPAKRPNMAGRKMAPPPPSAPRDSAVSMNSQDSSGGSGRGTPNSASNASLAGGLAEALRQRQEAMHGKQDDDDEW.

A disordered region spans residues 1–41 (MGHSRRPVGGEKKSRGFGRSKAVADVGDGRQTGGKPQVKKA). One can recognise a Myosin motor domain in the interval 51–730 (IGVSDLTLLS…TLFALEAMRD (680 aa)). 144–151 (GESGAGKT) contacts ATP. At Ser-372 the chain carries Phosphoserine. Residues 419 to 501 (SIGILDIYGF…PGVFAALNDA (83 aa)) are actin-binding. 2 IQ domains span residues 734-754 (HNMAIRIQRAWRNYLRYRIEC) and 755-780 (AIRIQRFWRRMTGGLELIKVRDQGHK). In terms of domain architecture, TH1 spans 788–976 (RRRMSLLGSR…TIHTSAGEPP (189 aa)). Over residues 956-970 (GSSNVDTYKSSTIHT) the composition is skewed to polar residues. Disordered stretches follow at residues 956–1080 (GSSN…PKKP) and 1127–1246 (WTPQ…DDEW). Pro residues-rich tracts occupy residues 1033 to 1045 (APQPAAVPRPVPQ) and 1065 to 1078 (APPPPPPVSPPAPK). One can recognise an SH3 domain in the interval 1077–1138 (PKKPMAKVLY…PQAYLEEQKA (62 aa)). Composition is skewed to low complexity over residues 1151–1166 (TPATNGTATAAAAKAK) and 1214–1228 (NSASNASLAGGLAEA). Residues 1229-1240 (LRQRQEAMHGKQ) are compositionally biased toward basic and acidic residues.

It belongs to the TRAFAC class myosin-kinesin ATPase superfamily. Myosin family. In terms of processing, phosphorylation of the TEDS site (Ser-372) is required for the polarization of the actin cytoskeleton. Phosphorylation probably activates the myosin-I ATPase activity.

It localises to the cytoplasm. The protein localises to the cytoskeleton. It is found in the actin patch. Functionally, type-I myosin implicated in the organization of the actin cytoskeleton. Required for proper actin cytoskeleton polarization. At the cell cortex, assembles in patch-like structures together with proteins from the actin-polymerizing machinery and promotes actin assembly. Functions as actin nucleation-promoting factor (NPF) for the Arp2/3 complex. Plays an important role in polarized growth, spore germination, hyphal morphogenesis, and septal wall formation. The sequence is that of Myosin-1 (myoA) from Aspergillus terreus (strain NIH 2624 / FGSC A1156).